The chain runs to 356 residues: S-adenosylmethionine:tRNA ribosyltransferase-isomerase (356 aa).

Belongs to the QueA family. Monomer.

The protein localises to the cytoplasm. The enzyme catalyses 7-aminomethyl-7-carbaguanosine(34) in tRNA + S-adenosyl-L-methionine = epoxyqueuosine(34) in tRNA + adenine + L-methionine + 2 H(+). The protein operates within tRNA modification; tRNA-queuosine biosynthesis. Functionally, transfers and isomerizes the ribose moiety from AdoMet to the 7-aminomethyl group of 7-deazaguanine (preQ1-tRNA) to give epoxyqueuosine (oQ-tRNA). In Yersinia pseudotuberculosis serotype IB (strain PB1/+), this protein is S-adenosylmethionine:tRNA ribosyltransferase-isomerase.